The chain runs to 37 residues: Cytochrome b6-f complex subunit 5 (37 aa).

A helical membrane pass occupies residues 5–25 (LLSGIVLGLVPVTIAGLFVTA).

The protein belongs to the PetG family. As to quaternary structure, the 4 large subunits of the cytochrome b6-f complex are cytochrome b6, subunit IV (17 kDa polypeptide, PetD), cytochrome f and the Rieske protein, while the 4 small subunits are PetG, PetL, PetM and PetN. The complex functions as a dimer.

It localises to the plastid. The protein localises to the chloroplast thylakoid membrane. Component of the cytochrome b6-f complex, which mediates electron transfer between photosystem II (PSII) and photosystem I (PSI), cyclic electron flow around PSI, and state transitions. PetG is required for either the stability or assembly of the cytochrome b6-f complex. The protein is Cytochrome b6-f complex subunit 5 of Stigeoclonium helveticum (Green alga).